The sequence spans 256 residues: NH(3)-dependent NAD(+) synthetase (256 aa).

Residue 29–36 (GISGGIDS) coordinates ATP. Residue D35 coordinates Mg(2+). R115 lines the deamido-NAD(+) pocket. T135 contributes to the ATP binding site. Position 140 (E140) interacts with Mg(2+). 2 residues coordinate deamido-NAD(+): K148 and D155. ATP is bound by residues K164 and S186. 245 to 246 (HK) serves as a coordination point for deamido-NAD(+).

Belongs to the NAD synthetase family. As to quaternary structure, homodimer.

It catalyses the reaction deamido-NAD(+) + NH4(+) + ATP = AMP + diphosphate + NAD(+) + H(+). The protein operates within cofactor biosynthesis; NAD(+) biosynthesis; NAD(+) from deamido-NAD(+) (ammonia route): step 1/1. Catalyzes the ATP-dependent amidation of deamido-NAD to form NAD. Uses ammonia as a nitrogen source. The sequence is that of NH(3)-dependent NAD(+) synthetase from Methanosarcina acetivorans (strain ATCC 35395 / DSM 2834 / JCM 12185 / C2A).